Reading from the N-terminus, the 292-residue chain is Ribosomal protein L11 methyltransferase (292 aa).

Positions 143, 164, 186, and 228 each coordinate S-adenosyl-L-methionine.

The protein belongs to the methyltransferase superfamily. PrmA family.

It localises to the cytoplasm. The catalysed reaction is L-lysyl-[protein] + 3 S-adenosyl-L-methionine = N(6),N(6),N(6)-trimethyl-L-lysyl-[protein] + 3 S-adenosyl-L-homocysteine + 3 H(+). Its function is as follows. Methylates ribosomal protein L11. This is Ribosomal protein L11 methyltransferase from Tolumonas auensis (strain DSM 9187 / NBRC 110442 / TA 4).